Reading from the N-terminus, the 214-residue chain is LOB domain-containing protein 7 (214 aa).

Positions 12–113 constitute an LOB domain; the sequence is TACAACKHQR…TELNLTRQQI (102 aa).

It belongs to the LOB domain-containing protein family.

This is LOB domain-containing protein 7 (LBD7) from Arabidopsis thaliana (Mouse-ear cress).